We begin with the raw amino-acid sequence, 77 residues long: Translational regulator CsrA (77 aa).

This sequence belongs to the CsrA/RsmA family. In terms of assembly, homodimer; the beta-strands of each monomer intercalate to form a hydrophobic core, while the alpha-helices form wings that extend away from the core.

It localises to the cytoplasm. A translational regulator that binds mRNA to regulate translation initiation and/or mRNA stability. Usually binds in the 5'-UTR at or near the Shine-Dalgarno sequence preventing ribosome-binding, thus repressing translation. Its main target seems to be the major flagellin gene, while its function is anatagonized by FliW. This is Translational regulator CsrA from Desulfitobacterium hafniense (strain DSM 10664 / DCB-2).